The primary structure comprises 138 residues: Large ribosomal subunit protein uL16 (138 aa).

A compositionally biased stretch (basic residues) spans 1–15 (MLSPRKVKYRKKQRG). Residues 1-20 (MLSPRKVKYRKKQRGRLSGE) are disordered.

Belongs to the universal ribosomal protein uL16 family. In terms of assembly, part of the 50S ribosomal subunit.

Functionally, binds 23S rRNA and is also seen to make contacts with the A and possibly P site tRNAs. The chain is Large ribosomal subunit protein uL16 from Borrelia turicatae (strain 91E135).